Here is a 386-residue protein sequence, read N- to C-terminus: ATP synthase subunit a (386 aa).

4 helical membrane passes run 150-170, 243-263, 270-290, and 310-330; these read FTNE…LFFV, HFLI…IVGF, FFSF…LVLL, and MMAG…MLFL.

It belongs to the ATPase A chain family. F-type ATPases have 2 components, CF(1) - the catalytic core - and CF(0) - the membrane proton channel. CF(1) has five subunits: alpha(3), beta(3), gamma(1), delta(1), epsilon(1). CF(0) has three main subunits: a, b and c.

Its subcellular location is the mitochondrion inner membrane. In terms of biological role, mitochondrial membrane ATP synthase (F(1)F(0) ATP synthase or Complex V) produces ATP from ADP in the presence of a proton gradient across the membrane which is generated by electron transport complexes of the respiratory chain. F-type ATPases consist of two structural domains, F(1) - containing the extramembraneous catalytic core and F(0) - containing the membrane proton channel, linked together by a central stalk and a peripheral stalk. During catalysis, ATP synthesis in the catalytic domain of F(1) is coupled via a rotary mechanism of the central stalk subunits to proton translocation. Key component of the proton channel; it may play a direct role in the translocation of protons across the membrane. The polypeptide is ATP synthase subunit a (ATP6) (Triticum aestivum (Wheat)).